A 288-amino-acid chain; its full sequence is MQLHEQIANISVTFNDIPRSDHSMTPTELCYFDDFATTLVVDSVLNFTTHKMSKKRRYLYQDEYRTARTVMKTFREQRDWTNAIYGLLTLRSVSHFLSKLPPNKLFEFRDHIVRFLNMFILDSGYTIQECKRYSQEGHQGAKLVSTGVWSRGDKIERLSGVVCLLSSEDEDSILAQEGSDFSVMYSTRKRCSTLWLGPGAYINHDCRPTCEFVSHGSTAHIRVLRDMVPGDEITCFYGSEFFGPNNIDCECCTCEKNMNGAFSYLRGNENAEPIISEKKTKYELRSRS.

Residues 128–238 enclose the SET domain; the sequence is QECKRYSQEG…PGDEITCFYG (111 aa).

This sequence belongs to the class V-like SAM-binding methyltransferase superfamily. Histone-lysine methyltransferase family. Suvar4-20 subfamily.

The protein resides in the nucleus. Its subcellular location is the chromosome. The catalysed reaction is N(6)-methyl-L-lysyl(20)-[histone H4] + S-adenosyl-L-methionine = N(6),N(6)-dimethyl-L-lysyl(20)-[histone H4] + S-adenosyl-L-homocysteine + H(+). The enzyme catalyses N(6),N(6)-dimethyl-L-lysyl(20)-[histone H4] + S-adenosyl-L-methionine = N(6),N(6),N(6)-trimethyl-L-lysyl(20)-[histone H4] + S-adenosyl-L-homocysteine + H(+). Histone methyltransferase that specifically di- and trimethylates 'Lys-20' of histone H4 (H4K20me2/me3). H4 'Lys-20' trimethylation represents a specific tag for epigenetic transcriptional repression. Contributes to dosage compensation of X chromosome-relative to autosome-linked gene expression, possibly by converting H4K20me1 to H4K20m2/me3 on autosomes. Involved in the regulation of growth and body fat metabolism downstream of the TOR complex 2 pathway. This Caenorhabditis elegans protein is Histone-lysine N-methyltransferase Suv4-20 (set-4).